Consider the following 278-residue polypeptide: Ras-related protein Rab-40B (278 aa).

GTP is bound by residues serine 23, glycine 26, and lysine 27. The switch-I stretch occupies residues 41 to 49 (SPYGHPAGI). Aspartate 69 is a binding site for Mg(2+). GTP contacts are provided by glycine 72, asparagine 126, and arginine 127. The tract at residues 72–88 (GQGRFCTIFRSYSRGAQ) is switch-II. The SOCS box domain occupies 175–228 (LLRHGMDRLWRPSKVLSLQDLCCRAVVSCTPVHLVDKLPLPIALRSHLKSFSMA). The segment at 242 to 278 (SLTTSSTHKRSSLRKVKLVRPPQSPPKNCTRNSCKIS) is disordered. Positions 248-259 (THKRSSLRKVKL) are enriched in basic residues. Polar residues predominate over residues 267 to 278 (PKNCTRNSCKIS). Cysteine 270 carries S-palmitoyl cysteine lipidation. The S-geranylgeranyl cysteine moiety is linked to residue cysteine 275.

The protein belongs to the small GTPase superfamily. Rab family. As to quaternary structure, component of the cullin-5-RING E3 ubiquitin-protein ligase complex (ECS(RAB40B) complex) composed of CUL5, Elongin BC (ELOB and ELOC), RNF7/RBX2 and RAB40B; RAB40B interaction with ECS complex is GTP-independent. Binds (GTP-bound) LIMA1; interaction promotes LIMA1 subcellular localization in lamellipodia during cell migration. Interacts (GTP-bound) with TKS5/SH3PXD2A (via PX domain); interaction promotes invadopodia-mediated extracellular matrix degradation. Mg(2+) is required as a cofactor.

Its subcellular location is the cell membrane. The protein resides in the cytoplasm. The protein localises to the cytosol. It localises to the cell projection. It is found in the lamellipodium membrane. Its subcellular location is the ruffle. The enzyme catalyses GTP + H2O = GDP + phosphate + H(+). Its pathway is protein modification; protein ubiquitination. Regulated by guanine nucleotide exchange factors (GEFs) which promote the exchange of bound GDP for free GTP. Regulated by GTPase activating proteins (GAPs) which increase the GTP hydrolysis activity. Inhibited by GDP dissociation inhibitors (GDIs). In terms of biological role, RAB40B small GTPase acts as substrate-recognition components of the ECS(RAB40B) E3 ubiquitin ligase complex which mediates the ubiquitination of target proteins. The Rab40 subfamily belongs to the Rab family that are key regulators of intracellular membrane trafficking, from the formation of transport vesicles to their fusion with membranes. Rabs cycle between an inactive GDP-bound form and an active GTP-bound form that is able to recruit to membranes different sets of downstream effectors directly responsible for vesicle formation, movement, tethering and fusion. As part of the ECS(RAB40B) complex, GTP-bound RAB40B promotes LIMA1/EPLIN ubiquitination and degradation, thereby regulating leading-edge actin dynamics during cell migration. As part of the ECS(RAB40B) complex, GTP-bound RAB40B also ubiquitinates RAP2A GTPase which promotes its localization to lamellipodia and activation to drive cell migration. The ECS(RAB40B) complex does not mediate canonical ubiquitin-dependent degradation of RAP2. RAB40B also binds TKS5/SH3PXD2A effector independently from ECS complex to promote invadopodia-mediated extracellular matrix degradation. The chain is Ras-related protein Rab-40B from Homo sapiens (Human).